We begin with the raw amino-acid sequence, 154 residues long: Interleukin-2 (154 aa).

A signal peptide spans 1 to 20 (MYKIQLLSCIALTLILVTNS). Cysteines 78 and 126 form a disulfide. Asn111 carries N-linked (GlcNAc...) asparagine glycosylation.

This sequence belongs to the IL-2 family.

The protein localises to the secreted. Functionally, cytokine produced by activated CD4-positive helper T-cells and to a lesser extend activated CD8-positive T-cells and natural killer (NK) cells that plays pivotal roles in the immune response and tolerance. Binds to a receptor complex composed of either the high-affinity trimeric IL-2R (IL2RA/CD25, IL2RB/CD122 and IL2RG/CD132) or the low-affinity dimeric IL-2R (IL2RB and IL2RG). Interaction with the receptor leads to oligomerization and conformation changes in the IL-2R subunits resulting in downstream signaling starting with phosphorylation of JAK1 and JAK3. In turn, JAK1 and JAK3 phosphorylate the receptor to form a docking site leading to the phosphorylation of several substrates including STAT5. This process leads to activation of several pathways including STAT, phosphoinositide-3-kinase/PI3K and mitogen-activated protein kinase/MAPK pathways. Functions as a T-cell growth factor and can increase NK-cell cytolytic activity as well. Promotes strong proliferation of activated B-cells and subsequently immunoglobulin production. Plays a pivotal role in regulating the adaptive immune system by controlling the survival and proliferation of regulatory T-cells, which are required for the maintenance of immune tolerance. Moreover, participates in the differentiation and homeostasis of effector T-cell subsets, including Th1, Th2, Th17 as well as memory CD8-positive T-cells. In Felis catus (Cat), this protein is Interleukin-2 (IL2).